The sequence spans 445 residues: Exodeoxyribonuclease 7 large subunit (445 aa).

Belongs to the XseA family. In terms of assembly, heterooligomer composed of large and small subunits.

The protein localises to the cytoplasm. It catalyses the reaction Exonucleolytic cleavage in either 5'- to 3'- or 3'- to 5'-direction to yield nucleoside 5'-phosphates.. In terms of biological role, bidirectionally degrades single-stranded DNA into large acid-insoluble oligonucleotides, which are then degraded further into small acid-soluble oligonucleotides. In Xanthomonas oryzae pv. oryzae (strain MAFF 311018), this protein is Exodeoxyribonuclease 7 large subunit.